A 108-amino-acid chain; its full sequence is FK506-binding protein 1 (108 aa).

One can recognise a PPIase FKBP-type domain in the interval 20–108 (GDAVTIHYVG…VFDVELLGIN (89 aa)).

It belongs to the FKBP-type PPIase family. FKBP1 subfamily.

It is found in the cytoplasm. It carries out the reaction [protein]-peptidylproline (omega=180) = [protein]-peptidylproline (omega=0). Its activity is regulated as follows. Inhibited by both FK506 and rapamycin. In terms of biological role, PPIases accelerate the folding of proteins. It catalyzes the cis-trans isomerization of proline imidic peptide bonds in oligopeptides. This chain is FK506-binding protein 1 (FPR1), found in Yarrowia lipolytica (strain CLIB 122 / E 150) (Yeast).